The chain runs to 224 residues: Redox-sensing transcriptional repressor Rex (224 aa).

A DNA-binding region (H-T-H motif) is located at residues 17-56; that stretch reads RYHRYLEELLKNDVKRISSRELSEKMGVTASQIRQDLNNF. 91–96 is an NAD(+) binding site; the sequence is GAGNLG.

This sequence belongs to the transcriptional regulatory Rex family. As to quaternary structure, homodimer.

It localises to the cytoplasm. Modulates transcription in response to changes in cellular NADH/NAD(+) redox state. This is Redox-sensing transcriptional repressor Rex from Thermoanaerobacter sp. (strain X514).